A 498-amino-acid chain; its full sequence is MLQCRPAQEFSFGPRALKDALVSTDAALQQLYVSAFSPAERLFLAEAYNPQRTLFCTLLIRTGFDWLLSRPEAPEDFQTFHASLQHRKPRLARKHIYLQPIDLSEEPVGSSLLHQLCSCTEAFFLGLRVKCLPSVAAASIRCSSRPSRDSDRLQLHTDGILSFLKNNKPGDALCVLGLTLSDLYPHEAWSFTFSKFLPGHEVGVCSFARFSGEFPKSGPSAPDLALVEAAADGPEAPLQDRGWALCFSALGMVQCCKVTCHELCHLLGLGNCRWLRCLMQGALSLDEALRRPLDLCPICLRKLQHVLGFRLIERYQRLYTWTQAVVGTWPSQEAGEPSVWEDTPPASADSGMCCESDSEPGTSVSEPLTPDAGSHTFASGPEEGLSYLAASEAPLPPGGPAEAIKEHERWLAMCIQALQREVAEEDLVQVDRAVDALDRWEMFTGQLPATRQDPPSSRDSVGLRKVLGDKFSSLRRKLSARKLARAESAPRPWDGEES.

His-261 serves as a coordination point for Zn(2+). Residue Glu-262 is the Proton acceptor of the active site. Zn(2+) is bound by residues His-265, Cys-272, Cys-277, Cys-296, and Cys-299. The interval 332 to 381 is disordered; it reads QEAGEPSVWEDTPPASADSGMCCESDSEPGTSVSEPLTPDAGSHTFASGP.

It belongs to the peptidase M54 family. Requires Zn(2+) as cofactor.

Probable zinc metalloprotease. The chain is Archaemetzincin-1 (AMZ1) from Homo sapiens (Human).